The following is a 361-amino-acid chain: MAGNTIGQLFRVTTFGESHGLALGGIVDGVPPGIPLTEADLQHDLDRRRPGTSRYTTQRREPDQVKILSGVFDGVTTGTSIGLLIENTDQRSQDYSAIKDVFRPGHADYTYEQKYGLRDYRGGGRSSARETAMRVAAGAIAKKYLAEKFGIEIRGCLTQMGDIPLEIKDWRQVELNPFFCPDADKLDALDELMRALKKEGDSIGAKVTVMASGVPAGLGEPVFDRLDADIAHALMSINAVKGVEIGEGFNVVALRGSQNRDEITAQGFQSNHAGGILGGISSGQHIVAHMALKPTSSITVPGRTINRMGEEVEMITKGRHDPCVGIRAVPIAEAMLAIVLMDHLLRHRAQNADVKTEIPRW.

Arg-48 and Arg-54 together coordinate NADP(+). Residues 125-127 (RSS), 238-239 (NA), Gly-278, 293-297 (KPTSS), and Arg-319 each bind FMN.

Belongs to the chorismate synthase family. In terms of assembly, homotetramer. Requires FMNH2 as cofactor.

It catalyses the reaction 5-O-(1-carboxyvinyl)-3-phosphoshikimate = chorismate + phosphate. It functions in the pathway metabolic intermediate biosynthesis; chorismate biosynthesis; chorismate from D-erythrose 4-phosphate and phosphoenolpyruvate: step 7/7. Its function is as follows. Catalyzes the anti-1,4-elimination of the C-3 phosphate and the C-6 proR hydrogen from 5-enolpyruvylshikimate-3-phosphate (EPSP) to yield chorismate, which is the branch point compound that serves as the starting substrate for the three terminal pathways of aromatic amino acid biosynthesis. This reaction introduces a second double bond into the aromatic ring system. The sequence is that of Chorismate synthase from Salmonella typhi.